The primary structure comprises 323 residues: tRNA dimethylallyltransferase (323 aa).

Residue 12-19 participates in ATP binding; the sequence is GPTAAGKT. 14 to 19 contacts substrate; sequence TAAGKT. Interaction with substrate tRNA regions lie at residues 37–40 and 161–165; these read DSAL and QRLIR.

It belongs to the IPP transferase family. Monomer. It depends on Mg(2+) as a cofactor.

It catalyses the reaction adenosine(37) in tRNA + dimethylallyl diphosphate = N(6)-dimethylallyladenosine(37) in tRNA + diphosphate. Functionally, catalyzes the transfer of a dimethylallyl group onto the adenine at position 37 in tRNAs that read codons beginning with uridine, leading to the formation of N6-(dimethylallyl)adenosine (i(6)A). This chain is tRNA dimethylallyltransferase, found in Pseudomonas syringae pv. tomato (strain ATCC BAA-871 / DC3000).